A 269-amino-acid polypeptide reads, in one-letter code: 5'-nucleotidase SurE (269 aa).

4 residues coordinate a divalent metal cation: Asp11, Asp12, Ser43, and Asn101.

Belongs to the SurE nucleotidase family. A divalent metal cation serves as cofactor.

It is found in the cytoplasm. It catalyses the reaction a ribonucleoside 5'-phosphate + H2O = a ribonucleoside + phosphate. Its function is as follows. Nucleotidase that shows phosphatase activity on nucleoside 5'-monophosphates. The chain is 5'-nucleotidase SurE from Prochlorococcus marinus (strain MIT 9301).